Reading from the N-terminus, the 751-residue chain is Palmitoyltransferase ZDHHC8B (751 aa).

Topologically, residues 1–13 (MPNSVGKRFKPTK) are cytoplasmic. The chain crosses the membrane as a helical span at residues 14 to 34 (YIPVSTAATLLVGSTTLFFVF). The Extracellular segment spans residues 35–41 (TCPWLTK). A helical transmembrane segment spans residues 42–62 (AVSPVVPLYNGIVFLFVLANF). At 63–148 (SMATFMDPGV…NCIGRRNYRY (86 aa)) the chain is on the cytoplasmic side. The DHHC domain maps to 104–154 (KWCATCHFYRPPRCSHCSVCDNCVEEFDHHCPWVNNCIGRRNYRYFFLFLL). The S-palmitoyl cysteine intermediate role is filled by Cys134. A helical membrane pass occupies residues 149-169 (FFLFLLSLSVHMVGVFSFGLL). Residues 170 to 185 (FVLHHLETLSALHTTV) lie on the Extracellular side of the membrane. The helical transmembrane segment at 186–206 (TLVVMCVTGLFFIPVMGLTGF) threads the bilayer. The Cytoplasmic portion of the chain corresponds to 207–751 (HMVLVARGRT…VGGTTYEISV (545 aa)). Disordered stretches follow at residues 293-346 (RSKS…PSTP), 437-461 (CTPL…SPGT), 633-659 (RSSA…GMNR), 666-685 (RSPV…SPSY), and 703-736 (HLGT…HTSV). Residues 326–338 (SQLTSSEESSLSS) are compositionally biased toward low complexity. Composition is skewed to polar residues over residues 633–651 (RSSA…TSLH), 669–681 (VHQS…SVPR), and 724–733 (GTPSGTPSRH).

This sequence belongs to the DHHC palmitoyltransferase family. ERF2/ZDHHC9 subfamily.

The protein resides in the golgi apparatus membrane. It is found in the mitochondrion membrane. It catalyses the reaction L-cysteinyl-[protein] + hexadecanoyl-CoA = S-hexadecanoyl-L-cysteinyl-[protein] + CoA. In terms of biological role, palmitoyltransferase that catalyzes the addition of palmitate onto various protein substrates and therefore function in several unrelated biological processes. The sequence is that of Palmitoyltransferase ZDHHC8B from Danio rerio (Zebrafish).